The chain runs to 341 residues: Anthranilate phosphoribosyltransferase (341 aa).

Residues Gly81, 84–85 (GD), 91–94 (NVST), 109–117 (KHGNRSVSS), and Ser121 contribute to the 5-phospho-alpha-D-ribose 1-diphosphate site. Gly81 provides a ligand contact to anthranilate. Ser93 is a Mg(2+) binding site. Residue Asn112 coordinates anthranilate. Residue Arg167 coordinates anthranilate. 2 residues coordinate Mg(2+): Asp226 and Glu227.

The protein belongs to the anthranilate phosphoribosyltransferase family. In terms of assembly, homodimer. It depends on Mg(2+) as a cofactor.

It carries out the reaction N-(5-phospho-beta-D-ribosyl)anthranilate + diphosphate = 5-phospho-alpha-D-ribose 1-diphosphate + anthranilate. Its pathway is amino-acid biosynthesis; L-tryptophan biosynthesis; L-tryptophan from chorismate: step 2/5. Functionally, catalyzes the transfer of the phosphoribosyl group of 5-phosphorylribose-1-pyrophosphate (PRPP) to anthranilate to yield N-(5'-phosphoribosyl)-anthranilate (PRA). In Teredinibacter turnerae (strain ATCC 39867 / T7901), this protein is Anthranilate phosphoribosyltransferase.